The primary structure comprises 104 residues: L-rhamnose mutarotase (104 aa).

Y18 is a substrate binding site. H22 acts as the Proton donor in catalysis. Substrate contacts are provided by residues Y41 and 76–77; that span reads WW.

It belongs to the rhamnose mutarotase family. As to quaternary structure, homodimer.

It localises to the cytoplasm. The enzyme catalyses alpha-L-rhamnose = beta-L-rhamnose. It participates in carbohydrate metabolism; L-rhamnose metabolism. Involved in the anomeric conversion of L-rhamnose. This chain is L-rhamnose mutarotase, found in Bacteroides thetaiotaomicron (strain ATCC 29148 / DSM 2079 / JCM 5827 / CCUG 10774 / NCTC 10582 / VPI-5482 / E50).